We begin with the raw amino-acid sequence, 132 residues long: Small ribosomal subunit protein uS8 (132 aa).

The protein belongs to the universal ribosomal protein uS8 family. As to quaternary structure, part of the 30S ribosomal subunit. Contacts proteins S5 and S12.

In terms of biological role, one of the primary rRNA binding proteins, it binds directly to 16S rRNA central domain where it helps coordinate assembly of the platform of the 30S subunit. This is Small ribosomal subunit protein uS8 from Streptococcus mutans serotype c (strain ATCC 700610 / UA159).